We begin with the raw amino-acid sequence, 1104 residues long: Carbamoyl phosphate synthase large chain (1104 aa).

Positions 1 to 403 are carboxyphosphate synthetic domain; the sequence is MPRRQDIQKI…SFQKALRSLE (403 aa). Residues R129, R170, G176, G177, Q209, L211, E216, G242, I243, H244, Q286, and E300 each contribute to the ATP site. The region spanning 133 to 329 is the ATP-grasp 1 domain; sequence NEAMDKIGVK…IAKMAAKLAV (197 aa). Mg(2+) contacts are provided by Q286, E300, and N302. Q286, E300, and N302 together coordinate Mn(2+). The interval 404-552 is oligomerization domain; sequence TGRAGWGCDK…YSTYEEETEV (149 aa). The segment at 553-966 is carbamoyl phosphate synthetic domain; the sequence is IPASKPKVMI…AFAKAELGAG (414 aa). The ATP-grasp 2 domain occupies 703 to 900; sequence EKILQKLNIS…LAKLASLIMS (198 aa). R739, K778, L780, E785, G811, I812, H813, S814, Q854, and E871 together coordinate ATP. Residues Q854, E871, and N873 each coordinate Mg(2+). Mn(2+)-binding residues include Q854, E871, and N873. The MGS-like domain maps to 967–1104; it reads ERLPLTGTVF…KTIQEYCPNF (138 aa). Residues 967–1104 form an allosteric domain region; it reads ERLPLTGTVF…KTIQEYCPNF (138 aa).

This sequence belongs to the CarB family. In terms of assembly, composed of two chains; the small (or glutamine) chain promotes the hydrolysis of glutamine to ammonia, which is used by the large (or ammonia) chain to synthesize carbamoyl phosphate. Tetramer of heterodimers (alpha,beta)4. It depends on Mg(2+) as a cofactor. Mn(2+) is required as a cofactor.

The enzyme catalyses hydrogencarbonate + L-glutamine + 2 ATP + H2O = carbamoyl phosphate + L-glutamate + 2 ADP + phosphate + 2 H(+). It carries out the reaction hydrogencarbonate + NH4(+) + 2 ATP = carbamoyl phosphate + 2 ADP + phosphate + 2 H(+). It functions in the pathway amino-acid biosynthesis; L-arginine biosynthesis; carbamoyl phosphate from bicarbonate: step 1/1. Its pathway is pyrimidine metabolism; UMP biosynthesis via de novo pathway; (S)-dihydroorotate from bicarbonate: step 1/3. Its function is as follows. Large subunit of the glutamine-dependent carbamoyl phosphate synthetase (CPSase). CPSase catalyzes the formation of carbamoyl phosphate from the ammonia moiety of glutamine, carbonate, and phosphate donated by ATP, constituting the first step of 2 biosynthetic pathways, one leading to arginine and/or urea and the other to pyrimidine nucleotides. The large subunit (synthetase) binds the substrates ammonia (free or transferred from glutamine from the small subunit), hydrogencarbonate and ATP and carries out an ATP-coupled ligase reaction, activating hydrogencarbonate by forming carboxy phosphate which reacts with ammonia to form carbamoyl phosphate. This is Carbamoyl phosphate synthase large chain from Nostoc sp. (strain PCC 7120 / SAG 25.82 / UTEX 2576).